The following is a 244-amino-acid chain: Phosphoadenosine 5'-phosphosulfate reductase (244 aa).

Residue cysteine 239 is the Nucleophile; cysteine thiosulfonate intermediate of the active site.

It belongs to the PAPS reductase family. CysH subfamily.

It localises to the cytoplasm. The catalysed reaction is [thioredoxin]-disulfide + sulfite + adenosine 3',5'-bisphosphate + 2 H(+) = [thioredoxin]-dithiol + 3'-phosphoadenylyl sulfate. It functions in the pathway sulfur metabolism; hydrogen sulfide biosynthesis; sulfite from sulfate: step 3/3. Catalyzes the formation of sulfite from phosphoadenosine 5'-phosphosulfate (PAPS) using thioredoxin as an electron donor. This is Phosphoadenosine 5'-phosphosulfate reductase from Photorhabdus laumondii subsp. laumondii (strain DSM 15139 / CIP 105565 / TT01) (Photorhabdus luminescens subsp. laumondii).